The chain runs to 431 residues: Tyrosine--tRNA ligase (431 aa).

Residue Tyr33 participates in L-tyrosine binding. The 'HIGH' region motif lies at 38–47; the sequence is PTADSLHIGS. Residues Tyr172 and Gln176 each coordinate L-tyrosine. The short motif at 234–238 is the 'KMSKS' region element; that stretch reads KFGKS. Lys237 lines the ATP pocket. An S4 RNA-binding domain is found at 364-431; that stretch reads LDIVTVLNEK…KKNYFVIRVV (68 aa).

It belongs to the class-I aminoacyl-tRNA synthetase family. TyrS type 1 subfamily. In terms of assembly, homodimer.

The protein resides in the cytoplasm. It catalyses the reaction tRNA(Tyr) + L-tyrosine + ATP = L-tyrosyl-tRNA(Tyr) + AMP + diphosphate + H(+). In terms of biological role, catalyzes the attachment of tyrosine to tRNA(Tyr) in a two-step reaction: tyrosine is first activated by ATP to form Tyr-AMP and then transferred to the acceptor end of tRNA(Tyr). The sequence is that of Tyrosine--tRNA ligase from Flavobacterium johnsoniae (strain ATCC 17061 / DSM 2064 / JCM 8514 / BCRC 14874 / CCUG 350202 / NBRC 14942 / NCIMB 11054 / UW101) (Cytophaga johnsonae).